The primary structure comprises 948 residues: RNA polymerase-associated protein RapA (948 aa).

A Helicase ATP-binding domain is found at 164-332 (EVADRSAPRV…FARLRLLDPN (169 aa)). An ATP-binding site is contributed by 177-184 (DEVGLGKT). The short motif at 278–281 (DEAH) is the DEAH box element. The 155-residue stretch at 473–627 (RVDWLIDTLK…TCPTGNALQH (155 aa)) folds into the Helicase C-terminal domain.

Belongs to the SNF2/RAD54 helicase family. RapA subfamily. As to quaternary structure, interacts with the RNAP. Has a higher affinity for the core RNAP than for the holoenzyme. Its ATPase activity is stimulated by binding to RNAP.

Transcription regulator that activates transcription by stimulating RNA polymerase (RNAP) recycling in case of stress conditions such as supercoiled DNA or high salt concentrations. Probably acts by releasing the RNAP, when it is trapped or immobilized on tightly supercoiled DNA. Does not activate transcription on linear DNA. Probably not involved in DNA repair. In Pseudomonas putida (strain ATCC 700007 / DSM 6899 / JCM 31910 / BCRC 17059 / LMG 24140 / F1), this protein is RNA polymerase-associated protein RapA.